A 561-amino-acid polypeptide reads, in one-letter code: Asparagine synthetase [glutamine-hydrolyzing] (561 aa).

Cysteine 2 serves as the catalytic For GATase activity. In terms of domain architecture, Glutamine amidotransferase type-2 spans 2–191 (CGIWALFGSD…PGHYEVLDLK (190 aa)). Residues 49–53 (RLAVV), 75–77 (NGE), and aspartate 97 each bind L-glutamine. In terms of domain architecture, Asparagine synthetase spans 213 to 536 (HAACDTVGNL…PGRSSWLPHY (324 aa)). ATP-binding positions include leucine 256, isoleucine 288, and 363-364 (SG).

It carries out the reaction L-aspartate + L-glutamine + ATP + H2O = L-asparagine + L-glutamate + AMP + diphosphate + H(+). It participates in amino-acid biosynthesis; L-asparagine biosynthesis; L-asparagine from L-aspartate (L-Gln route): step 1/1. The protein is Asparagine synthetase [glutamine-hydrolyzing] (ASNS) of Gallus gallus (Chicken).